The primary structure comprises 262 residues: Matrilysin (262 aa).

The signal sequence occupies residues 1-12 (LCVLCLLPQSPA). Positions 13–89 (LPLPREAGGH…PRCGLPDTGE (77 aa)) are cleaved as a propeptide — activation peptide. A Cysteine switch motif is present at residues 80–87 (PRCGLPDT). Cys82 contributes to the Zn(2+) binding site. Asp148 is a Ca(2+) binding site. The Zn(2+) site is built by His158 and Asp160. Positions 165, 166, 168, and 170 each coordinate Ca(2+). Zn(2+) is bound at residue His173. Ca(2+) contacts are provided by Gly180, Gly182, and Asp184. A Zn(2+)-binding site is contributed by His186. Residues Asp188 and Glu191 each coordinate Ca(2+). A Zn(2+)-binding site is contributed by His209. Residue Glu210 is part of the active site. Zn(2+) contacts are provided by His213 and His219.

The protein belongs to the peptidase M10A family. Requires Ca(2+) as cofactor. Zn(2+) is required as a cofactor.

It is found in the secreted. Its subcellular location is the extracellular space. It localises to the extracellular matrix. The catalysed reaction is Cleavage of 14-Ala-|-Leu-15 and 16-Tyr-|-Leu-17 in B chain of insulin. No action on collagen types I, II, IV, V. Cleaves gelatin chain alpha2(I) &gt; alpha1(I).. In terms of biological role, degrades casein, gelatins of types I, III, IV, and V, and fibronectin. Activates procollagenase. This Felis catus (Cat) protein is Matrilysin (MMP7).